We begin with the raw amino-acid sequence, 671 residues long: Alpha-1,4-glucan:maltose-1-phosphate maltosyltransferase (671 aa).

Alpha-maltose 1-phosphate contacts are provided by Lys-252, Gln-312, and Asp-347. Catalysis depends on Asp-382, which acts as the Nucleophile. Residue Asn-383 participates in alpha-maltose 1-phosphate binding. The Proton donor role is filled by Glu-411. 521–522 is an alpha-maltose 1-phosphate binding site; the sequence is KY.

It belongs to the glycosyl hydrolase 13 family. GlgE subfamily. In terms of assembly, homodimer.

It carries out the reaction alpha-maltose 1-phosphate + [(1-&gt;4)-alpha-D-glucosyl](n) = [(1-&gt;4)-alpha-D-glucosyl](n+2) + phosphate. Maltosyltransferase that uses maltose 1-phosphate (M1P) as the sugar donor to elongate linear or branched alpha-(1-&gt;4)-glucans. Is involved in a branched alpha-glucan biosynthetic pathway from trehalose, together with TreS, Mak and GlgB. In Corynebacterium pseudotuberculosis (strain 1002), this protein is Alpha-1,4-glucan:maltose-1-phosphate maltosyltransferase.